A 326-amino-acid chain; its full sequence is Vacuolar protein sorting-associated protein 26A-B (326 aa).

Belongs to the VPS26 family. As to quaternary structure, component of the heterotrimeric retromer cargo-selective complex (CSC) which is believed to associate with variable sorting nexins to form functionally distinct retromer complex variants.

Its subcellular location is the cytoplasm. It localises to the endosome membrane. The protein localises to the early endosome. Its function is as follows. Acts as a component of the retromer cargo-selective complex (CSC). The CSC is believed to be the core functional component of retromer or respective retromer complex variants acting to prevent missorting of selected transmembrane cargo proteins into the lysosomal degradation pathway. Retromer mediates retrograde transport of cargo proteins from endosomes to the trans-Golgi network (TGN). This chain is Vacuolar protein sorting-associated protein 26A-B (vps26a-b), found in Xenopus laevis (African clawed frog).